The sequence spans 287 residues: Elongation factor Ts (287 aa).

The involved in Mg(2+) ion dislocation from EF-Tu stretch occupies residues Thr-80 to Leu-83.

The protein belongs to the EF-Ts family.

The protein resides in the cytoplasm. Associates with the EF-Tu.GDP complex and induces the exchange of GDP to GTP. It remains bound to the aminoacyl-tRNA.EF-Tu.GTP complex up to the GTP hydrolysis stage on the ribosome. This chain is Elongation factor Ts, found in Pseudomonas fluorescens (strain Pf0-1).